Consider the following 306-residue polypeptide: Cilia- and flagella-associated protein 73 (306 aa).

Coiled-coil stretches lie at residues 49-139 and 197-231; these read LQAQ…QRLE and QSEK…WESK.

Belongs to the CFAP73 family.

It is found in the cytoplasm. Its subcellular location is the cytoskeleton. The protein resides in the cilium axoneme. In terms of biological role, may play a role in ciliary/flagellar motility by regulating the assembly and the activity of axonemal inner dynein arm. The chain is Cilia- and flagella-associated protein 73 from Mus musculus (Mouse).